The sequence spans 446 residues: MQESQETHISNHLDEIVAAVSITPRKKLLNQLLQRALFQPPREKLRLSEEKAKSYASSHEYKKALHELVHCMALTRICYGDSHWKLAEAHVNLAKGYLQLKGMSLRAKQHAEKAKEILTSSVAPPYSDNTDVFKCSVELFHTLGQALLSLQKFKEASKNLTKAEILSKEMLQCGKIIKEEWMEIQARIKLSFAQVYQGQKKSKEALPHYQEALEYTEISRGEKSLECVPILRELAAAEQALGFHDASINNLIQAHLIVLRGSPSREEAATSAHSVACAAIASGRPEHHDVAEQYFQDSMANLKDAEGKETAKFLSIQDDYCHFLQVTGQDEKATSIFRESLEAKVAVFGDFSPEVAETYRLLGVADLAQGNQTGAHKKLKKCLQIQTLLYGPQDKRTLATQQTMDILSKAPEVPARPRPSPGAKAAFCAGGRPYSVPGRTRPSAAD.

TPR repeat units lie at residues 45-78 (LRLS…TRIC), 137-170 (VELF…SKEM), 186-219 (ARIK…TEIS), 310-347 (TAKF…KVAV), and 356-389 (AETY…QTLL). Residues 410-446 (APEVPARPRPSPGAKAAFCAGGRPYSVPGRTRPSAAD) are disordered.

In terms of assembly, associated with the EvC complex composed of EFCAB7, IQCE, EVC2 and EVC.

It localises to the cell projection. The protein localises to the cilium. In terms of biological role, participates positively in the ciliary Hedgehog (Hh) signaling. This is Tetratricopeptide repeat protein 23 (TTC23) from Bos taurus (Bovine).